A 471-amino-acid polypeptide reads, in one-letter code: Adenosylhomocysteinase (471 aa).

Substrate is bound by residues Thr-58, Asp-133, and Glu-195. Position 196-198 (196-198 (TTT)) interacts with NAD(+). Substrate contacts are provided by Lys-225 and Asp-229. NAD(+) contacts are provided by residues Asn-230, 259-264 (GFGDVG), Glu-282, Asn-317, 338-340 (IGH), and Asn-383.

Belongs to the adenosylhomocysteinase family. It depends on NAD(+) as a cofactor.

It localises to the cytoplasm. It catalyses the reaction S-adenosyl-L-homocysteine + H2O = L-homocysteine + adenosine. Its pathway is amino-acid biosynthesis; L-homocysteine biosynthesis; L-homocysteine from S-adenosyl-L-homocysteine: step 1/1. In terms of biological role, may play a key role in the regulation of the intracellular concentration of adenosylhomocysteine. The protein is Adenosylhomocysteinase of Rhodopseudomonas palustris (strain BisB5).